The sequence spans 708 residues: Polyribonucleotide nucleotidyltransferase (708 aa).

Residues Asp486 and Asp492 each coordinate Mg(2+). In terms of domain architecture, KH spans 553–612 (PRITTIKVPPQKVREVIGSGGKVIREITEVTGTKIDIEDDGTIKIASADAEATQRAVDWI). Positions 622-690 (GVVYTGKVVK…DRGKIKLSMK (69 aa)) constitute an S1 motif domain.

The protein belongs to the polyribonucleotide nucleotidyltransferase family. The cofactor is Mg(2+).

Its subcellular location is the cytoplasm. The catalysed reaction is RNA(n+1) + phosphate = RNA(n) + a ribonucleoside 5'-diphosphate. Functionally, involved in mRNA degradation. Catalyzes the phosphorolysis of single-stranded polyribonucleotides processively in the 3'- to 5'-direction. This is Polyribonucleotide nucleotidyltransferase from Rhodospirillum rubrum (strain ATCC 11170 / ATH 1.1.1 / DSM 467 / LMG 4362 / NCIMB 8255 / S1).